The following is a 156-amino-acid chain: ATP synthase subunit b (156 aa).

The chain crosses the membrane as a helical span at residues Leu-5–Val-25.

Belongs to the ATPase B chain family. F-type ATPases have 2 components, F(1) - the catalytic core - and F(0) - the membrane proton channel. F(1) has five subunits: alpha(3), beta(3), gamma(1), delta(1), epsilon(1). F(0) has three main subunits: a(1), b(2) and c(10-14). The alpha and beta chains form an alternating ring which encloses part of the gamma chain. F(1) is attached to F(0) by a central stalk formed by the gamma and epsilon chains, while a peripheral stalk is formed by the delta and b chains.

It localises to the cell inner membrane. In terms of biological role, f(1)F(0) ATP synthase produces ATP from ADP in the presence of a proton or sodium gradient. F-type ATPases consist of two structural domains, F(1) containing the extramembraneous catalytic core and F(0) containing the membrane proton channel, linked together by a central stalk and a peripheral stalk. During catalysis, ATP synthesis in the catalytic domain of F(1) is coupled via a rotary mechanism of the central stalk subunits to proton translocation. Functionally, component of the F(0) channel, it forms part of the peripheral stalk, linking F(1) to F(0). The sequence is that of ATP synthase subunit b from Chromohalobacter salexigens (strain ATCC BAA-138 / DSM 3043 / CIP 106854 / NCIMB 13768 / 1H11).